Consider the following 594-residue polypeptide: Acyl-coenzyme A thioesterase 11 (594 aa).

The N-terminal 20 residues, 1 to 20 (MIQNVGNHLRRGFASMFSNR), are a transit peptide targeting the mitochondrion. A phosphoserine mark is found at serine 15 and serine 25. The segment at 20–43 (RTSRKSISHPESGDPPTMAEGEGY) is disordered. The 113-residue stretch at 45-157 (NPTEVQMSQL…LATFVAHREL (113 aa)) folds into the HotDog ACOT-type 1 domain. Residues 93-95 (TAS), 122-124 (NSS), arginine 183, and 272-274 (HFR) contribute to the CoA site. One can recognise a HotDog ACOT-type 2 domain in the interval 217–330 (EKTRVESVEL…FMTFVVLDKD (114 aa)). The 213-residue stretch at 370–582 (KQAEVALSVP…FKACESFLLD (213 aa)) folds into the START domain.

The protein localises to the mitochondrion matrix. It is found in the cytoplasm. The catalysed reaction is hexadecanoyl-CoA + H2O = hexadecanoate + CoA + H(+). It carries out the reaction tetradecanoyl-CoA + H2O = tetradecanoate + CoA + H(+). It catalyses the reaction dodecanoyl-CoA + H2O = dodecanoate + CoA + H(+). The enzyme catalyses butanoyl-CoA + H2O = butanoate + CoA + H(+). It participates in lipid metabolism; fatty acid metabolism. Its function is as follows. Has an acyl-CoA thioesterase activity with a preference for the long chain fatty acyl-CoA thioesters hexadecanoyl-CoA/palmitoyl-CoA and tetradecanoyl-CoA/myristoyl-CoA which are the main substrates in the mitochondrial beta-oxidation pathway. This chain is Acyl-coenzyme A thioesterase 11 (Acot11), found in Mus musculus (Mouse).